The sequence spans 77 residues: Conotoxin LiC42 (77 aa).

Positions 1 to 22 (MKLTCVLIIAVLFLTASQLITA) are cleaved as a signal peptide. Residues 23-47 (DYSRDKQEYGAERLRDAMGKFKGSR) constitute a propeptide that is removed on maturation. 3 cysteine pairs are disulfide-bonded: C49/C62, C56/C67, and C61/C76.

It belongs to the conotoxin O1 superfamily. As to expression, expressed by the venom duct.

Its subcellular location is the secreted. The chain is Conotoxin LiC42 from Conus lividus (Livid cone).